The following is a 325-amino-acid chain: MTLTQEKRSYMEKLSDENGIISALAFDQRGALKRLMAQYQTQEPTIAQMEELKVLVAEELTPYASSMLLDPEYGLPAAKHLDKNAGLLLAYEKTGYDTTSTKRLPDCLVEWSAKRLKKQGADAVKFLLYYDVDGDEEVNQQKQAYIERIGSECKAEDIPFFLEILAYDETITDAASVEYAKVKPHKVLDAMKVFSDERFGIDVLKVEVPVNMKYVEGFGDGPIVHTQDQAANFFKQQDQATPLPYIYLSAGVSAKLFQDTLVFAKESGANFNGVLCGRATWAGSVKDYIEKGEAAARQWLRTEGFKNIDELNKVLKATATSWKER.

It belongs to the aldolase LacD family.

The enzyme catalyses D-tagatofuranose 1,6-bisphosphate = D-glyceraldehyde 3-phosphate + dihydroxyacetone phosphate. It participates in carbohydrate metabolism; D-tagatose 6-phosphate degradation; D-glyceraldehyde 3-phosphate and glycerone phosphate from D-tagatose 6-phosphate: step 2/2. This Streptococcus mutans serotype c (strain ATCC 700610 / UA159) protein is Tagatose 1,6-diphosphate aldolase 1 (lacD1).